A 702-amino-acid chain; its full sequence is Soluble guanylate cyclase gcy-31 (702 aa).

H104 contributes to the heme binding site. The stretch at 368 to 406 (TQQSAELKLLLHQEAQKSRNMRENMNRLKKERRRTDKLL) forms a coiled coil. A Guanylate cyclase domain is found at 435 to 564 (TILFTDIVEF…ETVYVANKME (130 aa)). D440 and D484 together coordinate Mg(2+). The interval 614 to 702 (RHGPHRVPSP…QDLTPRKSIT (89 aa)) is disordered. Residues 633–643 (SQTEDDDDDEL) show a composition bias toward acidic residues. The span at 683 to 695 (RNSNKTPRQSQDL) shows a compositional bias: polar residues.

Belongs to the adenylyl cyclase class-4/guanylyl cyclase family. In terms of assembly, heterodimer; with other soluble guanylate cyclases. It depends on heme as a cofactor. Expressed in a pair of bilaterally symmetric neurons in the head.

It is found in the cytoplasm. It carries out the reaction GTP = 3',5'-cyclic GMP + diphosphate. With respect to regulation, may be regulated by molecular oxygen. Probably not activated by nitric oxide (NO). Functionally, synthesizes cyclic GMP (cGMP) from GTP. May play a role in embryogenesis. This Caenorhabditis elegans protein is Soluble guanylate cyclase gcy-31 (gcy-31).